The sequence spans 739 residues: Vascular cell adhesion protein 1 (739 aa).

Positions 1–24 are cleaved as a signal peptide; the sequence is MPRKMVVIFGASNILWMVFAVSQA. Ig-like C2-type domains are found at residues 25–105, 109–212, 223–309, 312–399, 408–506, 511–595, and 600–684; these read SKME…KKLE, QVEI…KERE, PRNT…LIVQ, PFTV…IKVD, EVEM…QTLY, PRDT…VELI, and PKDI…LTLD. At 25 to 698 the chain is on the extracellular side; sequence SKMEIFLEPR…ENNKDYFSPE (674 aa). 5 disulfides stabilise this stretch: Cys47-Cys95, Cys52-Cys99, Cys137-Cys195, Cys246-Cys291, and Cys335-Cys383. 2 N-linked (GlcNAc...) asparagine glycosylation sites follow: Asn76 and Asn77. N-linked (GlcNAc...) asparagine glycosylation occurs at Asn273. An N-linked (GlcNAc...) asparagine glycan is attached at Asn531. The cysteines at positions 534 and 579 are disulfide-linked. Residues 699–720 traverse the membrane as a helical segment; it reads LLVLYCASSLIIPAIGMIIYFA. The Cytoplasmic segment spans residues 721-739; it reads RRANMKGSYSLVEAQKSKV.

In terms of processing, cleaved by the metalloproteinase ADAM17 to generate the soluble form. Post-translationally, sialoglycoprotein. Ubiquitinated by TRIM65 via 'Lys-48'-linked ubiquitination; leading to proteasomal degradation.

The protein localises to the cell membrane. It localises to the secreted. In terms of biological role, cell adhesion glycoprotein predominantly expressed on the surface of endothelial cells that plays an important role in immune surveillance and inflammation. Acts as a major regulator of leukocyte adhesion to the endothelium through interaction with different types of integrins. During inflammatory responses, binds ligands on the surface of activated endothelial cells to initiate the activation of calcium channels and the plasma membrane-associated small GTPase RAC1 leading to leukocyte transendothelial migration. Also serves as a quality-control checkpoint for entry into bone marrow by providing a 'don't-eat-me' stamping in the context of major histocompatibility complex (MHC) class-I presentation. The sequence is that of Vascular cell adhesion protein 1 (VCAM1) from Canis lupus familiaris (Dog).